The primary structure comprises 293 residues: Elongation factor Ts (293 aa).

Residues T80–V83 form an involved in Mg(2+) ion dislocation from EF-Tu region.

It belongs to the EF-Ts family.

It localises to the cytoplasm. Associates with the EF-Tu.GDP complex and induces the exchange of GDP to GTP. It remains bound to the aminoacyl-tRNA.EF-Tu.GTP complex up to the GTP hydrolysis stage on the ribosome. The chain is Elongation factor Ts from Burkholderia cenocepacia (strain ATCC BAA-245 / DSM 16553 / LMG 16656 / NCTC 13227 / J2315 / CF5610) (Burkholderia cepacia (strain J2315)).